Consider the following 290-residue polypeptide: Large ribosomal subunit protein uL3 (290 aa).

An N5-methylglutamine modification is found at Gln152. Residues 250–290 (ARLAEEQAAAEAESLAQAEAEIAAEGSDAAPEGDADKKDGE) form a disordered region. Residues 255–274 (EQAAAEAESLAQAEAEIAAE) are compositionally biased toward low complexity.

This sequence belongs to the universal ribosomal protein uL3 family. Part of the 50S ribosomal subunit. Forms a cluster with proteins L14 and L19. Post-translationally, methylated by PrmB.

In terms of biological role, one of the primary rRNA binding proteins, it binds directly near the 3'-end of the 23S rRNA, where it nucleates assembly of the 50S subunit. This is Large ribosomal subunit protein uL3 from Jannaschia sp. (strain CCS1).